Consider the following 84-residue polypeptide: MPDADICFMDIKEILAENVRSYRNINNLSQEQLAEISGLHRTYIGSVERKERNVTLSTLIILAKALNTSVPKLLTRQGLKNEQG.

The HTH cro/C1-type domain occupies Val-19–Leu-73. Residues Gln-30–Arg-49 constitute a DNA-binding region (H-T-H motif).

Its function is as follows. May control expression of its associated restriction-modification system SmaI. The polypeptide is Control protein C.SmaI (Serratia marcescens).